Here is a 131-residue protein sequence, read N- to C-terminus: Small ribosomal subunit protein uS8 (131 aa).

The protein belongs to the universal ribosomal protein uS8 family. In terms of assembly, part of the 30S ribosomal subunit. Contacts proteins S5 and S12.

One of the primary rRNA binding proteins, it binds directly to 16S rRNA central domain where it helps coordinate assembly of the platform of the 30S subunit. This is Small ribosomal subunit protein uS8 from Helicobacter pylori (strain P12).